The sequence spans 377 residues: NIF3-like protein 1 (377 aa).

At Lys-109 the chain carries N6-acetyllysine. The segment at 244–377 (LLLYTGMGRL…ETDRDPLHVI (134 aa)) is mediates interaction with COPS2. At Thr-255 the chain carries Phosphothreonine. At Ser-259 the chain carries Phosphoserine.

Belongs to the GTP cyclohydrolase I type 2/NIF3 family. In terms of assembly, homodimer. Interacts with COPS2. Interacts with THOC7.

It localises to the cytoplasm. It is found in the nucleus. In terms of biological role, may function as a transcriptional corepressor through its interaction with COPS2, negatively regulating the expression of genes involved in neuronal differentiation. This chain is NIF3-like protein 1, found in Bos taurus (Bovine).